The primary structure comprises 159 residues: Sumo-conjugating enzyme ubc9 (159 aa).

The region spanning 4–157 (ISSARLSEER…VKAQSKVYPP (154 aa)) is the UBC core domain. The active-site Glycyl thioester intermediate is the Cys93.

Belongs to the ubiquitin-conjugating enzyme family.

Its subcellular location is the nucleus. Its pathway is protein modification; protein sumoylation. Accepts the ubiquitin-like protein sumo from the E1 complex and catalyzes its covalent attachment to other proteins with the help of an E3 ligase. The protein is Sumo-conjugating enzyme ubc9 (ubc9) of Dictyostelium discoideum (Social amoeba).